The following is a 576-amino-acid chain: Protein HYPER-SENSITIVITY-RELATED 4 (576 aa).

Residues 55-75 (LATAKTVLTTAASVAATAMLA) form a helical membrane-spanning segment. An ATP-binding site is contributed by 306–313 (GPPGTGKS). Residues 508–532 (DKAKTEKQELENKKKTKEGTDSVVK) are disordered.

The protein belongs to the AAA ATPase family. BCS1 subfamily. As to quaternary structure, binds to the Yariv phenylglycoside (beta-D-Glc)(3). Requires Mg(2+) as cofactor.

The protein resides in the membrane. It carries out the reaction ATP + H2O = ADP + phosphate + H(+). In Arabidopsis thaliana (Mouse-ear cress), this protein is Protein HYPER-SENSITIVITY-RELATED 4.